We begin with the raw amino-acid sequence, 460 residues long: MLKVLIPTIMLFPTIWLSSSKWLWTTTTMNSFLIAFISLTWLKWTSDTGWNASNSYMAADPLSTPLLVLTCWLLPLMILASQNHINSEPVNRQRMYITLLASLQTFMIMAFGATKIIMFYIMFEATLIPTLIIITRWGNQAERLNAGTYFLFYTLAGSLPLLVALLLLQQSTGTLSMLVLQYSDPLLLNSWGHKIWWAGCLIAFLVKMPLYGMHLWLPKAHVEAPVAGSMILAAVLLKLGGYGMMRMMVMLDPLSKQLAYPFIILALWGVIMTGLVCLRQTDLKSLIAYSSVGHMGLVAGGILIQTPWGFTGAIILMIAHGLTSSALFCLANTSYERTHSRTMILARGLQMVLPLATVWWFIANLANLALPPLPNLMGELMIITALFNWSPWTIIITGMGTLITANYSLYMFLTSQRGSIPEHITNLSPSHTREHLLMTLHLIPIILLMLKPELMWGWCN.

The next 13 membrane-spanning stretches (helical) occupy residues 20–42 (SKWL…LTWL), 61–81 (PLST…ILAS), 94–113 (RMYI…AFGA), 114–134 (TKII…LIII), 148–168 (TYFL…LLLL), 195–215 (IWWA…GMHL), 225–245 (PVAG…YGMM), 258–278 (LAYP…LVCL), 285–304 (SLIA…GILI), 308–330 (WGFT…LFCL), 351–371 (MVLP…LALP), 380–400 (LMII…TGMG), and 436–456 (LLMT…ELMW).

It belongs to the complex I subunit 4 family. Core subunit of respiratory chain NADH dehydrogenase (Complex I) which is composed of 45 different subunits.

Its subcellular location is the mitochondrion inner membrane. It carries out the reaction a ubiquinone + NADH + 5 H(+)(in) = a ubiquinol + NAD(+) + 4 H(+)(out). Functionally, core subunit of the mitochondrial membrane respiratory chain NADH dehydrogenase (Complex I) which catalyzes electron transfer from NADH through the respiratory chain, using ubiquinone as an electron acceptor. Essential for the catalytic activity and assembly of complex I. In Danio rerio (Zebrafish), this protein is NADH-ubiquinone oxidoreductase chain 4 (mt-nd4).